Consider the following 397-residue polypeptide: Mannosylglycerate synthase (397 aa).

GDP-alpha-D-mannose is bound by residues 7–11 (PFKHE), Ile35, Gln66, Lys76, Asp100, and 100–101 (DA). Asp102 is an a divalent metal cation binding site. Residues Arg131 and 136–139 (AMIT) each bind (R)-glycerate. Positions 163 and 192 each coordinate GDP-alpha-D-mannose. Residue His217 coordinates a divalent metal cation. GDP-alpha-D-mannose is bound by residues Arg218 and Tyr220.

Belongs to the glycosyltransferase 78 family. In terms of assembly, homotetramer. Dimer of dimers. Mg(2+) serves as cofactor. Ca(2+) is required as a cofactor. The cofactor is Mn(2+). It depends on Ni(2+) as a cofactor. Requires Co(2+) as cofactor.

It catalyses the reaction (R)-glycerate + GDP-alpha-D-mannose = (2R)-2-O-(alpha-D-mannosyl)-glycerate + GDP + H(+). With respect to regulation, inhibited by GDP. Functionally, involved in the biosynthesis of the stress protectant 2-O-alpha-D-mannosyl glycerate (MG) which is produced in response to growth at supraoptimal temperature and salinity, and protects several enzymes against inactivation by temperature, freeze-drying and osmotic stress. Catalyzes the condensation of alpha-GDP-D-mannose (GDP-Man) with D-glycerate to produce alpha-mannosyl-D-glycerate. It is specific for GDP-Man, but it can also use alpha-GDP-D-glucose (GDP-Glc), beta-GDP-D-fructose, alpha-UDP-D-mannose and alpha-UDP-D-glucose as sugar donors. It is specific for D-glycerate, but it can also use D-lactate and glycolate as sugar acceptors. This reaction occurs with a net retention of anomeric configuration; the newly formed glycosidic linkage has the same alpha configuration as the sugar donor. The polypeptide is Mannosylglycerate synthase (mgs) (Rhodothermus marinus (Rhodothermus obamensis)).